Reading from the N-terminus, the 93-residue chain is Non-histone chromosomal protein 6A (93 aa).

Disordered regions lie at residues 1–23 (MVTP…APKR) and 69–93 (PYEA…ATLA). Residues 7-16 (PKKRTTRKKK) are compositionally biased toward basic residues. Positions 21–89 (PKRALSAYMF…RYESEKELYN (69 aa)) form a DNA-binding region, HMG box. A compositionally biased stretch (basic and acidic residues) spans 69 to 87 (PYEAKAQADKKRYESEKEL).

This sequence belongs to the NHP6 family. As to quaternary structure, weakly associates with the stable SPT16-POB3 heterodimer to form the FACT (yFACT or SNP) complex, which is associated with nucleosomes. Multiple molecules of NHP6 (NHP6A and/or NHP6B) are required to recruit the SPT16-POB3 heterodimer to DNA.

It localises to the nucleus. The protein localises to the chromosome. Its function is as follows. DNA-binding protein that induces severe bending of DNA. Required for DNA-binding by the FACT complex, a general chromatin factor that acts to reorganize nucleosomes. The FACT complex is involved in multiple processes that require DNA as a template such as mRNA elongation, DNA replication and DNA repair. Also augments the fidelity of transcription by RNA polymerase III independently of any role in the FACT complex. Required for transcriptional initiation fidelity of some but not all tRNA genes. Seems to be functionally redundant with NHP6B. The protein is Non-histone chromosomal protein 6A (NHP6A) of Saccharomyces cerevisiae (strain ATCC 204508 / S288c) (Baker's yeast).